The sequence spans 46 residues: Esculentin-1A (46 aa).

A disulfide bond links Cys40 and Cys46.

Belongs to the frog skin active peptide (FSAP) family. Brevinin subfamily. In terms of tissue distribution, expressed by the skin glands.

The protein localises to the secreted. Shows antibacterial activity against representative Gram-negative and Gram-positive bacterial species, and hemolytic activity. The protein is Esculentin-1A of Pelophylax lessonae (Pool frog).